The following is a 583-amino-acid chain: MLO-like protein 6 (583 aa).

The Extracellular segment spans residues 1–15 (MADQVKEKTLEETST). The helical transmembrane segment at 16-36 (WAVAVVCFVLLLISIVIEKLI) threads the bilayer. At 37–61 (HKIGSWFKKKNKKALYEALEKVKAE) the chain is on the cytoplasmic side. Residues 62 to 82 (LMLMGFISLLLTIGQGYISNI) traverse the membrane as a helical segment. Topologically, residues 83-161 (CIPKNIAASM…VSAYGMHQLH (79 aa)) are extracellular. Residues 162–182 (IFIFVLAVCHVIYCIVTYALG) form a helical membrane-spanning segment. At 183–284 (KTKMRRWKKW…KYIQRSLEED (102 aa)) the chain is on the cytoplasmic side. The chain crosses the membrane as a helical span at residues 285–305 (FKTIVEINPVIWFIAVLFLLT). At 306–314 (NTNGLNSYL) the chain is on the extracellular side. A helical transmembrane segment spans residues 315–335 (WLPFIPFIVILIVGTKLQVII). At 336–368 (TKLGLRIQEKGDVVKGTPLVQPGDHFFWFGRPR) the chain is on the cytoplasmic side. A helical transmembrane segment spans residues 369 to 389 (FILFLIHLVLFTNAFQLAFFV). The Extracellular portion of the chain corresponds to 390-411 (WSTYEFGLKNCFHESRVDVIIR). Residues 412–432 (ISIGLLVQILCSYVTLPLYAL) traverse the membrane as a helical segment. Topologically, residues 433-583 (VTQMGSKMKP…ISLRDFSFKR (151 aa)) are cytoplasmic. Positions 447 to 468 (ERVATALKSWHHTAKKNIKHGR) are calmodulin-binding. Residues 461–583 (KKNIKHGRTS…ISLRDFSFKR (123 aa)) form a disordered region. A compositionally biased stretch (low complexity) spans 470–484 (SESTTPFSSRPTTPT). Residues 541–551 (RFGEEESEKKF) show a composition bias toward basic and acidic residues.

It belongs to the MLO family.

It localises to the membrane. Its function is as follows. May be involved in modulation of pathogen defense and leaf cell death. Activity seems to be regulated by Ca(2+)-dependent calmodulin binding and seems not to require heterotrimeric G proteins. This is MLO-like protein 6 (MLO6) from Arabidopsis thaliana (Mouse-ear cress).